We begin with the raw amino-acid sequence, 565 residues long: Small ribosomal subunit protein bS1 (565 aa).

S1 motif domains lie at 30-96 (SSVI…LSRD), 114-180 (NEKV…VSRR), 201-269 (GQVI…LGMK), 286-356 (NARF…LGLK), 373-443 (GSTV…LGVK), and 454-529 (GDVK…VSIK).

This sequence belongs to the bacterial ribosomal protein bS1 family. The initiator methionine may be removed.

Functionally, binds mRNA; thus facilitating recognition of the initiation point. It is needed to translate mRNA with a short Shine-Dalgarno (SD) purine-rich sequence. This is Small ribosomal subunit protein bS1 (rpsA) from Rhodopseudomonas palustris (strain ATCC BAA-98 / CGA009).